The primary structure comprises 304 residues: Hairy/enhancer-of-split related with YRPW motif protein 1 (304 aa).

Residues 1–52 (MKRAHPDYSSSDSELDETVEVEKESADENGNLSSALGSMSPTTSSQILARKR) form a disordered region. Positions 28–47 (ENGNLSSALGSMSPTTSSQI) are enriched in polar residues. Residues 48–117 (LARKRRRGII…GGKGYFDAHA (70 aa)) form a transcriptional repression and interaction with NCOR1 and SIN3A region. The region spanning 49-104 (ARKRRRGIIEKRRRDRINNSLSELRRLVPSAFEKQGSAKLEKAEILQMTVDHLKML) is the bHLH domain. In terms of domain architecture, Orange spans 122–158 (YRSLGFRECLAEVARYLSIIEGLDASDPLRVRLVSHL). Residues 191–234 (AHPLLLPQSGHGNTGTSASPTDPHHQGRLAAAHPEAPALRAPPS) form a disordered region. Residues 200–210 (GHGNTGTSASP) are compositionally biased toward polar residues. Low complexity predominate over residues 218-234 (RLAAAHPEAPALRAPPS).

Belongs to the HEY family. In terms of assembly, self-associates. Interacts with HES1 and HEYL. Interacts with HDAC1, NCOR1 and SIN3A. Interacts with GATA4 and GATA6. Interacts with CCDC89/BOIP.

It localises to the nucleus. Its function is as follows. Transcriptional repressor which binds preferentially to the canonical E box sequence 5'-CACGTG-3'. Downstream effector of Notch signaling required for cardiovascular development. Specifically required for the Notch-induced endocardial epithelial to mesenchymal transition, which is itself criticial for cardiac valve and septum development. May be required in conjunction with HEY2 to specify arterial cell fate or identity. Promotes maintenance of neuronal precursor cells and glial versus neuronal fate specification. Represses transcription by the cardiac transcriptional activators GATA4 and GATA6 and by the neuronal bHLH factors ASCL1/MASH1 and NEUROD4/MATH3. This Canis lupus familiaris (Dog) protein is Hairy/enhancer-of-split related with YRPW motif protein 1 (HEY1).